The following is a 236-amino-acid chain: Purine nucleoside phosphorylase DeoD-type (236 aa).

His-5 is a binding site for a purine D-ribonucleoside. Residues Gly-21, Arg-25, Arg-44, and 88 to 91 (RVGT) each bind phosphate. Residues 180–182 (EME) and 204–205 (SD) contribute to the a purine D-ribonucleoside site. The Proton donor role is filled by Asp-205.

It belongs to the PNP/UDP phosphorylase family. Homohexamer; trimer of homodimers.

The catalysed reaction is a purine D-ribonucleoside + phosphate = a purine nucleobase + alpha-D-ribose 1-phosphate. The enzyme catalyses a purine 2'-deoxy-D-ribonucleoside + phosphate = a purine nucleobase + 2-deoxy-alpha-D-ribose 1-phosphate. Its function is as follows. Catalyzes the reversible phosphorolytic breakdown of the N-glycosidic bond in the beta-(deoxy)ribonucleoside molecules, with the formation of the corresponding free purine bases and pentose-1-phosphate. This Shewanella loihica (strain ATCC BAA-1088 / PV-4) protein is Purine nucleoside phosphorylase DeoD-type.